A 234-amino-acid chain; its full sequence is tRNA (guanine-N(1)-)-methyltransferase (234 aa).

S-adenosyl-L-methionine-binding positions include Gly-112 and 132 to 137 (IGDFIL).

It belongs to the RNA methyltransferase TrmD family. Homodimer.

The protein resides in the cytoplasm. The enzyme catalyses guanosine(37) in tRNA + S-adenosyl-L-methionine = N(1)-methylguanosine(37) in tRNA + S-adenosyl-L-homocysteine + H(+). In terms of biological role, specifically methylates guanosine-37 in various tRNAs. In Campylobacter jejuni subsp. jejuni serotype O:6 (strain 81116 / NCTC 11828), this protein is tRNA (guanine-N(1)-)-methyltransferase.